The chain runs to 605 residues: Formin-binding protein 1-like (605 aa).

Residues Met1–Asp263 form the F-BAR domain. Residues Phe66–Val258 adopt a coiled-coil conformation. The segment at Ser245–Asp535 is interaction with CDC42. Ser295 is modified (phosphoserine). Residues Leu392 to Asp484 adopt a coiled-coil conformation. One can recognise an REM-1 domain in the interval His397–Glu474. The tract at residues Arg482–Pro538 is disordered. Phosphoserine is present on residues Ser488, Ser501, and Ser505. The interval Gly522–Ser605 is interaction with DNM1. Residues Phe527 to Pro536 are compositionally biased toward acidic residues. The region spanning Pro538–Glu599 is the SH3 domain. Positions Gly541 to Thr597 are interaction with DNM2 and WASL. Positions Gly541 to Ser605 are interaction with DAAM1, DIAPH1 and DIAPH2.

It belongs to the FNBP1 family. In terms of assembly, homodimerizes, the dimers can polymerize end-to-end to form filamentous structures. Interacts with GTP-bound CDC42. Interacts with DAAM1, DIAPH1, DIAPH2, DNM1, DNM2 and WASL/N-WASP. Interacts with ATG3. Interacts (via SH3 domain) with ABI1, WASF2, CDC42 and WIPF1.

The protein resides in the cytoplasm. It is found in the cytoskeleton. It localises to the cell cortex. Its subcellular location is the cytoplasmic vesicle. The protein localises to the cell membrane. Functionally, required to coordinate membrane tubulation with reorganization of the actin cytoskeleton during endocytosis. May bind to lipids such as phosphatidylinositol 4,5-bisphosphate and phosphatidylserine and promote membrane invagination and the formation of tubules. Also promotes CDC42-induced actin polymerization by activating the WASL-WASPIP complex, the predominant form of WASL/N-WASP in cells. Actin polymerization may promote the fission of membrane tubules to form endocytic vesicles. Essential for autophagy of intracellular bacterial pathogens. This chain is Formin-binding protein 1-like (Fnbp1l), found in Mus musculus (Mouse).